Consider the following 886-residue polypeptide: CRM-domain containing factor CFM3, chloroplastic/mitochondrial (886 aa).

The transit peptide at 1-70 (MAAAAMAISP…LDLRPEPSPS (70 aa)) directs the protein to the chloroplast and mitochondrion. Disordered regions lie at residues 56 to 84 (RPAS…TSRS) and 269 to 291 (TKGT…PPGH). 3 consecutive CRM domains span residues 174–270 (LTLP…EPTK), 378–475 (PSLS…ELAE), and 590–690 (ETIT…SKLR). The span at 270-281 (KGTSKNTQTLGM) shows a compositional bias: polar residues. The tract at residues 771–886 (SFDNSVAVQN…QSTELTNTCS (116 aa)) is disordered. Over residues 793–827 (NSDDEGDYSDEDDDEDDDNDEEDGFDYENDDEDDV) the composition is skewed to acidic residues. Polar residues-rich tracts occupy residues 841–852 (DFGSSDSENYVS) and 869–886 (DSRN…NTCS).

In terms of assembly, interacts with RNA. Part of large ribonucleo-protein particles that contain CAF1 and/or CAF2, and RNC1.

Its subcellular location is the plastid. The protein localises to the chloroplast. It is found in the mitochondrion. Binds specific group II introns in chloroplasts and facilitates their splicing. Acts on subgroup IIB introns. The substrates of the subgroup IIB also require the CRM domain proteins CAF1 or CAF2, with a simultaneous binding of CFM3 and CAF1 or CAF2. May influence the biogenesis of the mitochondrial small ribosomal subunit. This is CRM-domain containing factor CFM3, chloroplastic/mitochondrial from Oryza sativa subsp. japonica (Rice).